Reading from the N-terminus, the 338-residue chain is Cytochrome f (338 aa).

The first 45 residues, 1-45, serve as a signal peptide directing secretion; that stretch reads MNFKVCSFPSRRQSIAAFVRVLMVILLTLGALVSSDVLLPQPAAA. Tyrosine 46, cysteine 66, cysteine 69, and histidine 70 together coordinate heme. Residues 300–316 traverse the membrane as a helical segment; that stretch reads IAFLAAITLTQILLVLK.

It belongs to the cytochrome f family. As to quaternary structure, the 4 large subunits of the cytochrome b6-f complex are cytochrome b6, subunit IV (17 kDa polypeptide, PetD), cytochrome f and the Rieske protein, while the 4 small subunits are PetG, PetL, PetM and PetN. The complex functions as a dimer. Heme is required as a cofactor.

The protein localises to the cellular thylakoid membrane. Functionally, component of the cytochrome b6-f complex, which mediates electron transfer between photosystem II (PSII) and photosystem I (PSI), cyclic electron flow around PSI, and state transitions. This chain is Cytochrome f (petA), found in Leptolyngbya laminosa (Phormidium laminosum).